Reading from the N-terminus, the 70-residue chain is MESVLQKIDDLEMKLSFQDISIEELNQEVIKLNALVARQQQQMLLMVNKLHSIEPSNMASSAEETPPPHY.

This sequence belongs to the SlyX family.

This Shewanella frigidimarina (strain NCIMB 400) protein is Protein SlyX homolog.